Reading from the N-terminus, the 75-residue chain is Putative DNA-directed RNA polymerase subunit omega (75 aa).

The protein belongs to the RNA polymerase subunit omega family.

The protein localises to the plastid. It localises to the chloroplast. It catalyses the reaction RNA(n) + a ribonucleoside 5'-triphosphate = RNA(n+1) + diphosphate. In terms of biological role, may be involved in RNA polymerase activity. This chain is Putative DNA-directed RNA polymerase subunit omega (rpoZ), found in Porphyra purpurea (Red seaweed).